A 436-amino-acid polypeptide reads, in one-letter code: Cytochrome P450 monooxygenase phqO (436 aa).

Residue C377 participates in heme binding.

This sequence belongs to the cytochrome P450 family. It depends on heme as a cofactor.

It participates in alkaloid biosynthesis. In terms of biological role, cytochrome P450 monooxygenase; part of the gene cluster that mediates the biosynthesis of paraherquamide, a fungal indole alkaloid that belongs to a family of natural products containing a characteristic bicyclo[2.2.2]diazaoctane core. The first steps in the biosynthesis of paraherquamide is the production of the beta-methyl-proline precursor from L-isoleucine. They require oxidation of a terminally hydroxylated L-isoleucine to the corresponding aldehyde by enzymes which have still to be identified. Spontaneous cyclization and dehydration would yield the 4-methyl pyrolline-5-carboxylic acid, which is then reduced by the pyrroline-5-carboxylate reductase phqD leading to the beta-methyl-proline precursor. The next step of paraherquamide biosynthesis involves coupling of beta-methyl-proline and L-tryptophan by the bimodular NRPS phqB, to produce a monooxopiperazine intermediate. The reductase (R) domain of phqB utilizes NADPH for hydride transfer to reduce the thioester bond of the T domain-tethered linear dipeptide to a hemithioaminal intermediate, which spontaneously cleaves the C-S bond to release the aldehyde product. This compound undergoes spontaneous cyclization and dehydration to give a dienamine which is reverse prenylated at C-2 by the reverse prenyltransferase phqJ. The other prenyltransferase present in the cluster, phqI may be a redundant gene in the pathway. During biosynthetic assembly, the key step to produce the polycyclic core is catalyzed by the bifunctional reductase and intramolecular [4+2] Diels-Alderase, phqE, resulting in formation of the [2.2.2] diazaoctane intermediate preparaherquamide. Following formation of preparaherquamide, an indole 2,3-epoxidation-initiated pinacol-like rearrangement is catalyzed by the phqK FAD-dependent monooxygenase. The prenyltransferase phqA, the cytochrome P450 monooxygenase phqL, and the FAD-linked oxidoreductase phqH (or the cytochrome P450 monooxygenase phqM), are proposed to be involved in the formation of the pyran ring. The FAD-dependent monooxygenase phqK is likely responsible for generation of the spiro-oxindole, and the N-methylation is likely mediated by the phqN methyltransferase leading to the isolable natural product paraherquamide F. However, the order of these biosynthetic steps has still to be determined. In late-stage paraherquamide biosynthesis, the third P450 monooxygenase, phqO, is probably responsible for the C-14 hydroxylation, transforming paraherquamide F to paraherquamide G, and paraherquamide E to the final product paraherquamide A. The expansion from the 6-membered ring pyran (in paraherquamides F and G) to the 7-membered dioxepin ring (in paraherquamides A and E) represents a poorly understood but intriguing process that probably involves the 2-oxoglutarate-dependent dioxygenase phqC. Finally, the remaining members of the paraherquamide cluster, including phqI as well as phqM (or phqH), do not have a clearly prescribed role and appear to be redundant. This chain is Cytochrome P450 monooxygenase phqO, found in Penicillium fellutanum.